A 252-amino-acid chain; its full sequence is 3-deoxy-manno-octulosonate cytidylyltransferase (252 aa).

This sequence belongs to the KdsB family.

It is found in the cytoplasm. It carries out the reaction 3-deoxy-alpha-D-manno-oct-2-ulosonate + CTP = CMP-3-deoxy-beta-D-manno-octulosonate + diphosphate. The protein operates within nucleotide-sugar biosynthesis; CMP-3-deoxy-D-manno-octulosonate biosynthesis; CMP-3-deoxy-D-manno-octulosonate from 3-deoxy-D-manno-octulosonate and CTP: step 1/1. It participates in bacterial outer membrane biogenesis; lipopolysaccharide biosynthesis. In terms of biological role, activates KDO (a required 8-carbon sugar) for incorporation into bacterial lipopolysaccharide in Gram-negative bacteria. The polypeptide is 3-deoxy-manno-octulosonate cytidylyltransferase (Nitratidesulfovibrio vulgaris (strain ATCC 29579 / DSM 644 / CCUG 34227 / NCIMB 8303 / VKM B-1760 / Hildenborough) (Desulfovibrio vulgaris)).